A 411-amino-acid polypeptide reads, in one-letter code: G1/S-specific cyclin pas1 (411 aa).

Disordered regions lie at residues 210–253 (LKNQ…PSVL) and 307–326 (SLSKPVSLPPTPSSPKVGVY). The span at 218–252 (PSSSPQTTQDSSPILTMAPSTPVSVGSTPPSTPSV) shows a compositional bias: low complexity.

It belongs to the cyclin family.

Functionally, essential for the control of the cell cycle at the G1/S (start) transition. Interacts with the pef1 protein kinase. The pef1/pas1 complex activates the res2/cdc10 complex. The polypeptide is G1/S-specific cyclin pas1 (pas1) (Schizosaccharomyces pombe (strain 972 / ATCC 24843) (Fission yeast)).